A 259-amino-acid polypeptide reads, in one-letter code: Indole-3-glycerol phosphate synthase (259 aa).

It belongs to the TrpC family.

The enzyme catalyses 1-(2-carboxyphenylamino)-1-deoxy-D-ribulose 5-phosphate + H(+) = (1S,2R)-1-C-(indol-3-yl)glycerol 3-phosphate + CO2 + H2O. It functions in the pathway amino-acid biosynthesis; L-tryptophan biosynthesis; L-tryptophan from chorismate: step 4/5. The chain is Indole-3-glycerol phosphate synthase from Dehalococcoides mccartyi (strain ATCC BAA-2100 / JCM 16839 / KCTC 5957 / BAV1).